Reading from the N-terminus, the 91-residue chain is Na(+)/H(+) antiporter subunit F (91 aa).

3 consecutive transmembrane segments (helical) span residues 5-27 (ILMI…TLIG), 34-53 (IVAL…VIMM), and 63-82 (VVLV…SKFI).

This sequence belongs to the CPA3 antiporters (TC 2.A.63) subunit F family. Forms a heterooligomeric complex that consists of seven subunits: MrpA, MrpB, MrpC, MrpD, MrpE, MrpF and MrpG.

Its subcellular location is the cell membrane. Functionally, mnh complex is a Na(+)Li(+)/H(+) antiporter involved in Na(+) and/or Li(+) excretion and Na(+) resistance. Na(+)/H(+) antiport consumes a transmembrane electrical potential, and is thus inferred to be electrogenic. Does not transport K(+), Ca(2+) or Mg(2+). This is Na(+)/H(+) antiporter subunit F (mrpF) from Alkalihalophilus pseudofirmus (strain ATCC BAA-2126 / JCM 17055 / OF4) (Bacillus pseudofirmus).